An 81-amino-acid polypeptide reads, in one-letter code: Acyl carrier protein (81 aa).

The 79-residue stretch at 2-80 (ASKEEILAGL…DAVDFIDGAQ (79 aa)) folds into the Carrier domain. Serine 40 bears the O-(pantetheine 4'-phosphoryl)serine mark.

This sequence belongs to the acyl carrier protein (ACP) family. 4'-phosphopantetheine is transferred from CoA to a specific serine of apo-ACP by AcpS. This modification is essential for activity because fatty acids are bound in thioester linkage to the sulfhydryl of the prosthetic group.

Its subcellular location is the cytoplasm. Its pathway is lipid metabolism; fatty acid biosynthesis. Carrier of the growing fatty acid chain in fatty acid biosynthesis. This is Acyl carrier protein from Micrococcus luteus (strain ATCC 4698 / DSM 20030 / JCM 1464 / CCM 169 / CCUG 5858 / IAM 1056 / NBRC 3333 / NCIMB 9278 / NCTC 2665 / VKM Ac-2230) (Micrococcus lysodeikticus).